A 335-amino-acid chain; its full sequence is Ketol-acid reductoisomerase (NADP(+)) (335 aa).

A KARI N-terminal Rossmann domain is found at 5 to 185; it reads SKIYTDNDAN…GATRAGVIPT (181 aa). Residues 28–31, Ser56, and 86–89 contribute to the NADP(+) site; these read YGSQ and DMVQ. The active site involves His111. Position 137 (Gly137) interacts with NADP(+). In terms of domain architecture, KARI C-terminal knotted spans 186–331; the sequence is TFKEETETDL…NQLRDLVQKG (146 aa). Asp194, Glu198, Glu230, and Glu234 together coordinate Mg(2+). Position 255 (Ser255) interacts with substrate.

The protein belongs to the ketol-acid reductoisomerase family. The cofactor is Mg(2+).

It carries out the reaction (2R)-2,3-dihydroxy-3-methylbutanoate + NADP(+) = (2S)-2-acetolactate + NADPH + H(+). It catalyses the reaction (2R,3R)-2,3-dihydroxy-3-methylpentanoate + NADP(+) = (S)-2-ethyl-2-hydroxy-3-oxobutanoate + NADPH + H(+). It functions in the pathway amino-acid biosynthesis; L-isoleucine biosynthesis; L-isoleucine from 2-oxobutanoate: step 2/4. It participates in amino-acid biosynthesis; L-valine biosynthesis; L-valine from pyruvate: step 2/4. Its function is as follows. Involved in the biosynthesis of branched-chain amino acids (BCAA). Catalyzes an alkyl-migration followed by a ketol-acid reduction of (S)-2-acetolactate (S2AL) to yield (R)-2,3-dihydroxy-isovalerate. In the isomerase reaction, S2AL is rearranged via a Mg-dependent methyl migration to produce 3-hydroxy-3-methyl-2-ketobutyrate (HMKB). In the reductase reaction, this 2-ketoacid undergoes a metal-dependent reduction by NADPH to yield (R)-2,3-dihydroxy-isovalerate. The protein is Ketol-acid reductoisomerase (NADP(+)) of Saccharolobus solfataricus (strain ATCC 35092 / DSM 1617 / JCM 11322 / P2) (Sulfolobus solfataricus).